Here is a 499-residue protein sequence, read N- to C-terminus: Acetylcholine receptor subunit alpha-type acr-16 (499 aa).

An N-terminal signal peptide occupies residues 1-19 (MSSVCALLLSCALFLVAHG). The Extracellular segment spans residues 20 to 232 (SLQERRLYED…LHMRRRTLYY (213 aa)). Asn-43 and Asn-93 each carry an N-linked (GlcNAc...) asparagine glycan. 2 disulfide bridges follow: Cys-147-Cys-161 and Cys-211-Cys-212. Helical transmembrane passes span 233-253 (GFNLIMPCILTTLMTLLGFTL), 261-281 (ITLQITVLLSICFFLSIVSEM), and 289-309 (VPLLGIFFTCCMIVVTASTVF). Residues 310–473 (TVYVLNLHYR…WKFAAMVVDR (164 aa)) are Cytoplasmic-facing. The helical transmembrane segment at 474-494 (LCLYVFTIFIIASTIGIFWSA) threads the bilayer. The Extracellular segment spans residues 495-499 (PYLVA).

Belongs to the ligand-gated ion channel (TC 1.A.9) family. Acetylcholine receptor (TC 1.A.9.1) subfamily.

It localises to the postsynaptic cell membrane. It is found in the cell membrane. After binding acetylcholine, the AChR responds by an extensive change in conformation that affects all subunits and leads to opening of an ion-conducting channel across the plasma membrane. A subunit of the levamisole-insensitive nicotinic receptor. The polypeptide is Acetylcholine receptor subunit alpha-type acr-16 (Caenorhabditis briggsae).